Consider the following 514-residue polypeptide: MYQKLALISAFLATARAQSACTLQAETHPPLTWQKCSSGGTCTQQTGSVVIDANWRWTHATNSSTNCYDGNTWSSTLCPDNETCAKNCCLDGAAYASTYGVTTSADSLSIGFVTQSAQKNVGARLYLMASDTTYQEFTLLGNEFSFDVDVSQLPCGLNGALYFVSMDADGGVSKYPTNTAGAKYGTGYCDSQCPRDLKFINGQANVEGWEPSSNNANTGIGGHGSCCSEMDIWEANSISEALTPHPCTTVGQEICDGDSCGGTYSGDRYGGTCDPDGCDWNPYRLGNTSFYGPGSSFTLDTTKKLTVVTQFETSGAINRYYVQNGVTFQQPNAELGDYSGNSLDDDYCAAEEAEFGGSSFSDKGGLTQFKKATSGGMVLVMSLWDDYYANMLWLDSTYPTNETSSTPGAVRGSCSTSSGVPAQLESNSPNAKVVYSNIKFGPIGSTGNSSGGNPPGGNPPGTTTTRRPATSTGSSPGPTQTHYGQCGGIGYSGPTVCASGSTCQVLNPYYSQCL.

Positions Met1–Ala17 are cleaved as a signal peptide. A catalytic region spans residues Gln18–Asn453. 10 cysteine pairs are disulfide-bonded: Cys21–Cys89, Cys36–Cys42, Cys67–Cys88, Cys78–Cys84, Cys155–Cys414, Cys189–Cys227, Cys193–Cys226, Cys247–Cys273, Cys255–Cys260, and Cys278–Cys348. N-linked (GlcNAc...) asparagine glycans are attached at residues Asn62 and Asn81. The active-site Nucleophile is the Glu229. Glu234 (proton donor) is an active-site residue. N-linked (GlcNAc...) asparagine glycosylation is present at Asn287. Disordered stretches follow at residues Asn401–Asn427 and Gly444–Thr481. Positions Pro454–Pro478 are linker. Low complexity predominate over residues Pro460 to Thr479. Residues Pro478–Leu514 enclose the CBM1 domain. Intrachain disulfides connect Cys486/Cys503 and Cys497/Cys513.

This sequence belongs to the glycosyl hydrolase 7 (cellulase C) family.

It carries out the reaction Hydrolysis of (1-&gt;4)-beta-D-glucosidic linkages in cellulose and cellotetraose, releasing cellobiose from the non-reducing ends of the chains.. Its function is as follows. The biological conversion of cellulose to glucose generally requires three types of hydrolytic enzymes: (1) Endoglucanases which cut internal beta-1,4-glucosidic bonds; (2) Exocellobiohydrolases that cut the disaccharide cellobiose from the non-reducing end of the cellulose polymer chain; (3) Beta-1,4-glucosidases which hydrolyze the cellobiose and other short cello-oligosaccharides to glucose. The chain is Exoglucanase 1 (cbh1) from Hypocrea rufa (Trichoderma viride).